We begin with the raw amino-acid sequence, 709 residues long: Elongation factor G (709 aa).

A tr-type G domain is found at 9-292 (AYYRNIGISA…AVVEYLPSPT (284 aa)). GTP contacts are provided by residues 18 to 25 (AHIDAGKT), 89 to 93 (DTPGH), and 143 to 146 (NKMD).

Belongs to the TRAFAC class translation factor GTPase superfamily. Classic translation factor GTPase family. EF-G/EF-2 subfamily.

The protein resides in the cytoplasm. Functionally, catalyzes the GTP-dependent ribosomal translocation step during translation elongation. During this step, the ribosome changes from the pre-translocational (PRE) to the post-translocational (POST) state as the newly formed A-site-bound peptidyl-tRNA and P-site-bound deacylated tRNA move to the P and E sites, respectively. Catalyzes the coordinated movement of the two tRNA molecules, the mRNA and conformational changes in the ribosome. This chain is Elongation factor G, found in Blochmanniella floridana.